Here is a 447-residue protein sequence, read N- to C-terminus: Argininosuccinate synthase (447 aa).

ATP-binding positions include 17-25 (AFSGGLDTS) and A43. Y99 lines the L-citrulline pocket. Residues G129 and T131 each coordinate ATP. 3 residues coordinate L-aspartate: T131, N135, and D136. N135 contacts L-citrulline. D136 contacts ATP. Residues R139 and S192 each contribute to the L-citrulline site. D194 contributes to the ATP binding site. Residues T201, E203, and E280 each coordinate L-citrulline.

The protein belongs to the argininosuccinate synthase family. Type 2 subfamily. As to quaternary structure, homotetramer.

It is found in the cytoplasm. It catalyses the reaction L-citrulline + L-aspartate + ATP = 2-(N(omega)-L-arginino)succinate + AMP + diphosphate + H(+). The protein operates within amino-acid biosynthesis; L-arginine biosynthesis; L-arginine from L-ornithine and carbamoyl phosphate: step 2/3. This chain is Argininosuccinate synthase, found in Shigella boydii serotype 18 (strain CDC 3083-94 / BS512).